Here is a 338-residue protein sequence, read N- to C-terminus: Glycerol-3-phosphate dehydrogenase [NAD(P)+] (338 aa).

NADPH contacts are provided by S14, Y15, H35, and K109. Residues K109, G138, and T140 each contribute to the sn-glycerol 3-phosphate site. A142 serves as a coordination point for NADPH. The sn-glycerol 3-phosphate site is built by K194, D247, S257, R258, and N259. The active-site Proton acceptor is K194. An NADPH-binding site is contributed by R258. V282 and E284 together coordinate NADPH.

The protein belongs to the NAD-dependent glycerol-3-phosphate dehydrogenase family.

It localises to the cytoplasm. It carries out the reaction sn-glycerol 3-phosphate + NAD(+) = dihydroxyacetone phosphate + NADH + H(+). The enzyme catalyses sn-glycerol 3-phosphate + NADP(+) = dihydroxyacetone phosphate + NADPH + H(+). Its pathway is membrane lipid metabolism; glycerophospholipid metabolism. Its function is as follows. Catalyzes the reduction of the glycolytic intermediate dihydroxyacetone phosphate (DHAP) to sn-glycerol 3-phosphate (G3P), the key precursor for phospholipid synthesis. This is Glycerol-3-phosphate dehydrogenase [NAD(P)+] from Sodalis glossinidius (strain morsitans).